A 132-amino-acid chain; its full sequence is Large ribosomal subunit protein uL14 (132 aa).

It belongs to the universal ribosomal protein uL14 family. Part of the 50S ribosomal subunit. Forms a cluster with proteins L3 and L24e, part of which may contact the 16S rRNA in 2 intersubunit bridges.

Binds to 23S rRNA. Forms part of two intersubunit bridges in the 70S ribosome. The chain is Large ribosomal subunit protein uL14 from Thermoplasma volcanium (strain ATCC 51530 / DSM 4299 / JCM 9571 / NBRC 15438 / GSS1).